A 222-amino-acid chain; its full sequence is Probable transaldolase (222 aa).

Residue K91 is the Schiff-base intermediate with substrate of the active site.

The protein belongs to the transaldolase family. Type 3B subfamily.

The protein resides in the cytoplasm. It carries out the reaction D-sedoheptulose 7-phosphate + D-glyceraldehyde 3-phosphate = D-erythrose 4-phosphate + beta-D-fructose 6-phosphate. Its pathway is carbohydrate degradation; pentose phosphate pathway; D-glyceraldehyde 3-phosphate and beta-D-fructose 6-phosphate from D-ribose 5-phosphate and D-xylulose 5-phosphate (non-oxidative stage): step 2/3. Transaldolase is important for the balance of metabolites in the pentose-phosphate pathway. The chain is Probable transaldolase from Chlorobium luteolum (strain DSM 273 / BCRC 81028 / 2530) (Pelodictyon luteolum).